The following is a 296-amino-acid chain: Cytidine deaminase (296 aa).

CMP/dCMP-type deaminase domains lie at 47–167 and 186–296; these read TEAE…FGPK and DSSD…VDPV. Residue 88–90 coordinates substrate; sequence NLE. His101 provides a ligand contact to Zn(2+). The active-site Proton donor is Glu103. Zn(2+) is bound by residues Cys128 and Cys131.

This sequence belongs to the cytidine and deoxycytidylate deaminase family. Homodimer. It depends on Zn(2+) as a cofactor.

The enzyme catalyses cytidine + H2O + H(+) = uridine + NH4(+). The catalysed reaction is 2'-deoxycytidine + H2O + H(+) = 2'-deoxyuridine + NH4(+). In terms of biological role, this enzyme scavenges exogenous and endogenous cytidine and 2'-deoxycytidine for UMP synthesis. The chain is Cytidine deaminase from Shewanella sp. (strain MR-7).